The chain runs to 276 residues: Undecaprenyl-diphosphatase 2 (276 aa).

8 consecutive transmembrane segments (helical) span residues 1–21, 44–64, 87–107, 114–134, 150–170, 190–210, 222–242, and 251–271; these read MSLW…LFPV, QLLP…LWYF, GHLM…GLLL, VFHD…LLWL, LTFK…IPGF, AAEF…LLEL, DALL…RFLM, and LASF…WFMF.

The protein belongs to the UppP family.

The protein localises to the cell inner membrane. It catalyses the reaction di-trans,octa-cis-undecaprenyl diphosphate + H2O = di-trans,octa-cis-undecaprenyl phosphate + phosphate + H(+). Catalyzes the dephosphorylation of undecaprenyl diphosphate (UPP). Confers resistance to bacitracin. The protein is Undecaprenyl-diphosphatase 2 of Burkholderia thailandensis (strain ATCC 700388 / DSM 13276 / CCUG 48851 / CIP 106301 / E264).